The primary structure comprises 623 residues: Putative ABC transporter ATP-binding protein MG014 homolog (623 aa).

The ABC transmembrane type-1 domain maps to 16 to 325; it reads LILAPLFTFA…YIVLGLILTS (310 aa). 6 consecutive transmembrane segments (helical) span residues 27 to 47, 86 to 106, 157 to 177, 180 to 200, 266 to 286, and 307 to 327; these read IIIDLIIPSFLASAIAVVFSI, VILLALFGLVFGLISIFCASI, FLRLIVRAPFLFIGGLAFAIA, SDMSISLAITFPLTFLVIGIL, NIPFTFFFSSMTIIIALLLVF, and IFAFFQYNFYIVLGLILTSLT. The ABC transporter domain occupies 365-611; it reads LEFKNVAFGL…CDIYVKMKQA (247 aa). Position 400 to 407 (400 to 407) interacts with ATP; it reads GPTGSGKS.

The protein belongs to the ABC transporter superfamily.

It localises to the cell membrane. The chain is Putative ABC transporter ATP-binding protein MG014 homolog from Mycoplasma pneumoniae (strain ATCC 29342 / M129 / Subtype 1) (Mycoplasmoides pneumoniae).